The primary structure comprises 320 residues: Cytochrome c biogenesis protein CcsA (320 aa).

8 helical membrane-spanning segments follow: residues 13-33, 46-66, 73-93, 102-122, 147-167, 226-246, 259-274, and 289-309; these read ISFSVVSIVITIHFLTLFLLV, GMIVTFFCITGLLVTRWIYSG, LYESLIFLSWGFSLIHMVSYL, LSAITAPSAIFTQGFATSGLL, MVLGYAALLCGSLLSVALLVI, IISLGFIFLTIGILSGAVWAN, ETWAFITWTVFAIYFH, and VASMGFLIIWICYFGVNLLGI.

Belongs to the CcmF/CycK/Ccl1/NrfE/CcsA family. As to quaternary structure, may interact with Ccs1.

It localises to the plastid. It is found in the chloroplast thylakoid membrane. Functionally, required during biogenesis of c-type cytochromes (cytochrome c6 and cytochrome f) at the step of heme attachment. The chain is Cytochrome c biogenesis protein CcsA from Gossypium hirsutum (Upland cotton).